The sequence spans 204 residues: UPF0637 protein lmo1065 (204 aa).

It belongs to the UPF0637 family.

This is UPF0637 protein lmo1065 from Listeria monocytogenes serovar 1/2a (strain ATCC BAA-679 / EGD-e).